The primary structure comprises 479 residues: MAQHAVYFPDAFLTQMREAMPSTLSFDEFISACQRPLRRSIRINTLKISVADFLALIAPYGWSLTPIPWCHEGFWIERDDEEALPLGSTAEHLSGLFYIQEASSMLPVAALFADDNHPQRVMDMAAAPGSKTTQIAARMGNRGAILANEFSASRVKVLHANISRCGIANTALTHFDGRVFGAALPEMFDAILLDAPCSGEGVVRKDPDALKNWSPESNLDIAATQRELLDSAFHALRPGGTLVYSTCTLNRQENEAVCLWLKETYADAVEFLPLGDLFPDADRALTPEGFLHVFPQIYDCEGFFVARLRKMSSLPAMPAPGYKVGAFPFTSLKGREALNVTQAANAVGLLWDENLHLWQREKEVWLFPAEIESLIGKVRFSRLGIKLAESHNKGYRWQHEATIALACPTHAHAFELSVQEAEEWYRGRDIYPQTPPAADDVLVTFQHQPLGLAKRIGARIKNSYPRELVRDGKLFTGNS.

S-adenosyl-L-methionine-binding positions include 125–131 (AAAPGSK), Glu-149, Asp-176, and Asp-194. Cys-247 (nucleophile) is an active-site residue.

This sequence belongs to the class I-like SAM-binding methyltransferase superfamily. RsmB/NOP family.

The protein resides in the cytoplasm. The catalysed reaction is cytidine(1407) in 16S rRNA + S-adenosyl-L-methionine = 5-methylcytidine(1407) in 16S rRNA + S-adenosyl-L-homocysteine + H(+). Specifically methylates the cytosine at position 1407 (m5C1407) of 16S rRNA. The polypeptide is Ribosomal RNA small subunit methyltransferase F (Salmonella typhi).